The primary structure comprises 90 residues: Small ribosomal subunit protein uS17 (90 aa).

It belongs to the universal ribosomal protein uS17 family. In terms of assembly, part of the 30S ribosomal subunit.

One of the primary rRNA binding proteins, it binds specifically to the 5'-end of 16S ribosomal RNA. The chain is Small ribosomal subunit protein uS17 from Cutibacterium acnes (strain DSM 16379 / KPA171202) (Propionibacterium acnes).